Reading from the N-terminus, the 366-residue chain is 2-oxoglutarate synthase subunit KorA (366 aa).

As to quaternary structure, heterotetramer of the KorA, KorB, KorC and KorD subunits.

It catalyses the reaction 2 oxidized [2Fe-2S]-[ferredoxin] + 2-oxoglutarate + CoA = succinyl-CoA + 2 reduced [2Fe-2S]-[ferredoxin] + CO2 + H(+). The chain is 2-oxoglutarate synthase subunit KorA (korA) from Methanocaldococcus jannaschii (strain ATCC 43067 / DSM 2661 / JAL-1 / JCM 10045 / NBRC 100440) (Methanococcus jannaschii).